The primary structure comprises 5376 residues: Zonadhesin (5376 aa).

Positions 1-17 (MALPVWTLMLLVGAAWG) are cleaved as a signal peptide. Residues 18–5310 (QEQVPAWRPN…TTRKKIEASS (5293 aa)) are Extracellular-facing. MAM domains follow at residues 45 to 210 (SKCD…TCNQ), 215 to 374 (QMCT…PCGE), and 377 to 542 (PQCD…PCRV). N-linked (GlcNAc...) asparagine glycosylation is found at N339 and N499. The tract at residues 547–1170 (EIPSSPLLPP…PTTGVSTTES (624 aa)) is 80 X heptapeptide repeats (approximate) (mucin-like domain). Disordered regions lie at residues 553–579 (LLPP…TKAT) and 1037–1113 (TVPP…TVST). The span at 1052 to 1113 (TEVTTTPPEE…IASEETTVST (62 aa)) shows a compositional bias: low complexity. The region spanning 1171–1220 (CPPNAHIELCACPASCESPKPSCQPPCIPGCVCNPGFLFSNNQCINESSC) is the TIL 1 domain. N1216, N1239, and N1314 each carry an N-linked (GlcNAc...) asparagine glycan. The 49-residue stretch at 1227–1275 (KHYKPGEEWFTPNCTERCRCLPGSLMECQISQCGTHTVCQLKSDQYQCE) folds into the VWFC 1 domain. Positions 1280 to 1462 (ATCLVYGDLH…DKDWVSSRCQ (183 aa)) constitute a VWFD 1 domain. Cystine bridges form between C1282–C1417 and C1304–C1461. One can recognise a TIL 2 domain in the interval 1555-1608 (CPKNSRYSLCAKPCPETCHPISTTQHCSDKCVEGCECDPGFILSGSECVPSSQC). Residues 1609 to 1664 (GCTSFQGRYFKLQEQWFNPDCKEICTCESHNHILCKPWKCKAQEACSYKNGVLGCH) enclose the VWFC 2 domain. The VWFD 2 domain occupies 1669–1849 (ATCMVSGDPH…ILEASDPGCF (181 aa)). Disulfide bonds link C1671/C1809 and C1693/C1848. N-linked (GlcNAc...) asparagine glycosylation is found at N1814, N1908, and N1933. A TIL 3 domain is found at 1941–1995 (CPPRSSYNPCANSCPATCLTLSTPRDCPTLPCVEGCECQSGHILSGTTCVPLRQC). Residues 1996–2052 (GCSDQDGSYHLLGESWYTEKTCTTLCTCSAHSNITCSPTACKANHVCLRQEGLLRCA) enclose the VWFC 3 domain. N-linked (GlcNAc...) asparagine glycosylation is found at N2028, N2111, N2142, and N2332. A VWFD 3 domain is found at 2056–2239 (GECRISEDSQ…KDKSMDPNCQ (184 aa)). 2 disulfides stabilise this stretch: C2058–C2200 and C2080–C2238. One can recognise a TIL 4 domain in the interval 2340–2398 (CPAHSHYTNCLPSCPPSCLDPDSRCEGSGHKVPATCREGCICQPDYVLLNDKCVLRSHC). The region spanning 2399-2454 (GCKDAQGVFIPAGKTWISEDCTQSCTCMKGSMRCWDFQCPPGTYCKNSNDGSSNCV) is the VWFC 4 domain. Residues 2460–2518 (CPAHSKFTDCLPPCHPSCSDPDGHCEGISTNAHSNCKEGCVCQPGYVLRNDKCVLRIEC) form the TIL 5 domain. The 56-residue stretch at 2519 to 2574 (GCQHTQGGFIPAGKNWTSRGCSQSCDCMEGVIRCQNFQCPSGTYCQDIEDGTSNCA) folds into the VWFC 5 domain. N-linked (GlcNAc...) asparagine glycosylation is found at N2533 and N2575. The region spanning 2580 to 2638 (CPAHSSFTNCLPPCQPSCSDPEGHCGGSTTKAPSACQEGCVCEPDYVVLNNKCVPRIEC) is the TIL 6 domain. Residues 2639–2694 (GCKDAQGVLIPADKIWINKGCTQTCACVTGTIHCRDFQCPSGTYCKDIKDDASNCT) form the VWFC 6 domain. N2692 is a glycosylation site (N-linked (GlcNAc...) asparagine). The region spanning 2700–2758 (CPDHSLYTHCLPSCLLSCSDPDGLCRGTSPEAPSTCKEGCVCDPDYVLSNDKCVLRIEC) is the TIL 7 domain. The VWFC 7 domain maps to 2759 to 2814 (GCKDAQGVLIPAGKTWINRGCTQSCSCMGGAIQCQNFKCPSEAYCQDMEDGNSNCT). A glycan (N-linked (GlcNAc...) asparagine) is linked at N2812. The 59-residue stretch at 2820 to 2878 (CPAHSHYTNCLPTCQPSCSDPDGHCEGSSTKAPSACKEGCVCEPDYVMLNNKCVPRIEC) folds into the TIL 8 domain. The 56-residue stretch at 2879-2934 (GCKDTQGVLIPADKTWINRGCTQSCTCRGGAIQCQKYHCSSGTYCKDMEDDSSSCA) folds into the VWFC 8 domain. One can recognise a TIL 9 domain in the interval 2940 to 2998 (CPAHSHFTNCLPPCQPSCLDSEGHCEGSTTKAPSACQEGCVCEPDYVVLNNKCVPRIEC). Residues 2999–3054 (GCKDAQGVLIPADKTWINRGCTQSCTCKGGAIQCQKFQCPSETYCKDIEDGNSNCT) form the VWFC 9 domain. Residues N3052, N3065, N3144, and N3172 are each glycosylated (N-linked (GlcNAc...) asparagine). The 59-residue stretch at 3060-3118 (CPANSNFTSCLPSCQPSCSNTDVHCEGSSPNTLSSCREGCVCQSGYVLHNDKCILRNQC) folds into the TIL 10 domain. In terms of domain architecture, VWFC 10 spans 3119–3174 (GCKDAQGALIPEGKTWITSGCTQSCNCTGGAIQCQNFQCPLKTYCKDLKDGSSNCT). The TIL 11 domain occupies 3180–3238 (CPAHSRYTNCLPSCPPLCLDPEGLCEGTSPKVPSTCREGCICQPGYLMHKNKCVLRIFC). The VWFC 11 domain occupies 3239-3294 (GCKNTQGAFISADKTWISRGCTQSCTCPAGAIHCRNFKCPSGTYCKNGDNGSSNCT). N3288 and N3292 each carry an N-linked (GlcNAc...) asparagine glycan. The TIL 12 domain occupies 3300–3355 (CPTNSQFTDCLPSCVPSCSNRCEVTSPSVPSSCREGCLCNHGFVFSEDKCVPRTQC). One can recognise a VWFC 12 domain in the interval 3356–3411 (GCKDARGAIIPAGKTWTSKGCTQSCACVEGNIQCQNFQCPPETYCKDNSEGSSTCT). The region spanning 3417 to 3475 (CPAHTQYTSCLPSCLPSCLDPEGLCKDISPKVPSTCKEGCVCQSGYVLNSDKCVLRAEC) is the TIL 13 domain. One can recognise a VWFC 13 domain in the interval 3476–3531 (DCKDAQGALIPAGKTWTSPGCTQSCACMGGAVQCQSSQCPPGTYCKDNEDGNSNCA). Residues 3537 to 3595 (CPAHSLFTNCLPPCLPSCLDPDGLCKGASPKVPSTCKEGCICQSGYVLSNNKCLLRNRC) enclose the TIL 14 domain. Residues 3596–3651 (GCKDAHGALIPEDKTWVSRGCTQSCVCTGGSIQCLSSQCPPGAYCKDNEDGSSNCA) form the VWFC 14 domain. The region spanning 3657 to 3715 (CPANSHYTDCFPPCPPSCSDPEGHCEASGPRVLSTCREGCLCNPGFVLDRDKCVPRVEC) is the TIL 15 domain. In terms of domain architecture, VWFC 15 spans 3716 to 3771 (GCKDAQGALIPSGKTWTSPGCTQSCACMGGVVQCQSSQCPPGTYCKDNEDGNSNCA). The TIL 16 domain maps to 3777–3835 (CPTHSNYTDCLPFCLPSCLDPSALCGGTSPKGPSTCKEGCVCQPGYVLDKDKCILKIEC). Residue N3782 is glycosylated (N-linked (GlcNAc...) asparagine). In terms of domain architecture, VWFC 16 spans 3836–3891 (GCRDTQGAVIPAGKTWLSTGCIQSCACVEGTIQCQNFQCPPGTYCNHNNNCAKIPL). One can recognise a TIL 17 domain in the interval 3893-3951 (CPAHSHFTSCLPSCPPSCANLDGSCEQTSPKVPSTCKEGCLCQPGYFLNNGKCVLQTHC). A VWFC 17 domain is found at 3952–4007 (DCKDAEGGLVPAGKTWTSKDCTQSCACTGGAVQCQNFQCPLGTYCKDSGDGSSNCT). An N-linked (GlcNAc...) asparagine glycan is attached at N4005. Residues 4029–4087 (CPAHSHFTSCLPSCPPSCSNLDGSCVESNFKAPSVCKKGCICQPGYLLNNDKCVLRIQC) enclose the TIL 18 domain. In terms of domain architecture, VWFC 18 spans 4088-4143 (GCKDTQGGLIPAGRTWISSDCTKSCSCMGGIIQCRDFQCPPGTYCKESNDSSRTCA). An N-linked (GlcNAc...) asparagine glycan is attached at N4136. The region spanning 4149-4207 (CPAHSHYTNCLPACSRSCTDLDGHCEGTSPKVPSPCKEGCLCQPGYVVHNHKCVLQIHC) is the TIL 19 domain. A VWFC 19 domain is found at 4208–4262 (GCKDAQGGFVPAGKTWISRGCTQSCACVGGAVQCHNFTCPTGTQCQNSSCSKITV). Residues N4243 and N4254 are each glycosylated (N-linked (GlcNAc...) asparagine). The TIL 20 domain occupies 4264–4322 (CPAHSQYTTCLPSCLPSCFDPEGLCGGASPRAPSTCREGCVCEADYVLREDKCVLRTQC). One can recognise a VWFC 20 domain in the interval 4323–4378 (GCKDAQGDLIPANKTWLTRGCAQKCTCKGGNIHCWNFKCPLGTECKDSVDGGSNCT). N4335 and N4376 each carry an N-linked (GlcNAc...) asparagine glycan. The TIL 21 domain maps to 4384 to 4442 (CPAHSHHTYCLPSCIPSCSNVNDRCESTSLQRPSTCIEGCLCHSGFVFSKDKCVPRTQC). The VWFC 21 domain maps to 4443–4498 (GCKDSQGTLIPAGKNWITTGCSQRCTCTGGLVQCHDFQCPSGAECQDIEDGNSNCV). Residues 4504 to 4562 (CPAHSHYSKCLPPCQPSCSDPDGHCEGTSPEAPSTCEEGCVCEPDYVLSNDKCVPSSEC) enclose the TIL 22 domain. The VWFC 22 domain occupies 4563–4618 (GCKDAHGVLIPESKTWVSRGCTKNCTCKGGTVQCHDFSCPTGSRCLDNNEGNSNCV). Residue N4586 is glycosylated (N-linked (GlcNAc...) asparagine). A TIL 23 domain is found at 4624–4682 (CPAHSLYTNCLPSCLPSCSDPEGLCGGTSPEVPSTCKEGCICQSGYVLHKNKCMLRIHC). The VWFC 23 domain occupies 4683-4738 (DCKDFQGSLIKTGQTWISSGCSKICTCKGGFFQCQSYKCPSGTQCEESEDGSSNCV). The region spanning 4744 to 4802 (CPANSLYTHCLPTCLPSCSNPDGRCEGTSHKAPSTCREGCVCQPGYLLNKDTCVHKNQC) is the TIL 24 domain. Positions 4803 to 4858 (GCKDIRGNIIPAGNTWISSDCTQSCACTDGVIQCQNFVCPSGSHCQYNEDGSSDCA) constitute a VWFC 24 domain. One can recognise a VWFD 4 domain in the interval 4863 to 5038 (ERCTIFGDPY…SWEVKAQHAF (176 aa)). C4865 and C5001 are disulfide-bonded. N-linked (GlcNAc...) asparagine glycosylation is present at N5136. The 54-residue stretch at 5150-5203 (CPANTVYQRCMTPCPASCAKFVTPKVCEGPCVEGCASLPGYIYSDTQSLPVTHC) folds into the TIL 25 domain. One can recognise a VWFC 25 domain in the interval 5204–5258 (GCTADGIYYKLGDSFVTNDCSQHCTCASQGILLCEPYGCRAGESCMVANFTRGCF). N-linked (GlcNAc...) asparagine glycosylation occurs at N5252. An EGF-like domain is found at 5259–5295 (QDSPCLQNPCHNDGRCEEQGATFICHCDFGYGGEFCT). Intrachain disulfides connect C5263–C5274, C5268–C5283, and C5285–C5294. Residues 5311 to 5337 (LVAILPGVLVMVLVPVLLPRVYVYMAT) form a helical membrane-spanning segment. The Cytoplasmic segment spans residues 5338–5376 (RTTMGRRRMKRKEKKLLRQSRLRLEDADVPEPTFKATEF).

In terms of assembly, probably forms covalent oligomers. In testis, primarily in haploid spermatids.

The protein resides in the cell membrane. In terms of biological role, binds in a species-specific manner to the zona pellucida of the egg. May be involved in gamete recognition and/or signaling. This chain is Zonadhesin (Zan), found in Mus musculus (Mouse).